The sequence spans 519 residues: Glycerophosphoinositol permease 1 (519 aa).

The interval 1–32 (MSDLVKSSEVIETTEVPPHNNNNNKRHFKYDS) is disordered. Residues 39–59 (LAGGVKLKDALMILCAGFALI) traverse the membrane as a helical segment. The N-linked (GlcNAc...) asparagine glycan is linked to N93. 3 consecutive transmembrane segments (helical) span residues 94–114 (ASLVGTIFGQVIIGLTADYIG), 117–137 (WSIVTATCFLIFGTMMCAASH), and 141–161 (VNGMFWMLTIFRGVTGFGIGA). The N-linked (GlcNAc...) asparagine glycan is linked to N175. 8 consecutive transmembrane segments (helical) span residues 186-206 (ILATNLPLSFGGPFALCIFLI), 216-236 (DAIWRTMFAIGCFWPLSVFYF), 273-293 (VAWFLYDFVTFPNGIFSAGII), 313-333 (LLLGAIALPGVFVGAYVVDIL), 337-357 (YTMMIGFCGYIVFGLIVGCGY), 363-383 (ITGLFIVFYGLMMSCGNFGPG), 404-424 (GISAAIGKVGAVVGTKTFSPI), and 432-452 (WTFIIAAICGLAGVLVTFIFI). Positions 487 to 500 (EEEDLEGSSEDSSD) are enriched in acidic residues. Residues 487–519 (EEEDLEGSSEDSSDGEIVKNNTKNDVEKVDALK) are disordered. N506 carries an N-linked (GlcNAc...) asparagine glycan. Residues 508-519 (TKNDVEKVDALK) show a composition bias toward basic and acidic residues.

The protein belongs to the major facilitator superfamily. Sugar transporter (TC 2.A.1.1) family.

Its subcellular location is the cell membrane. It catalyses the reaction sn-glycero-3-phospho-1D-myo-inositol(out) = sn-glycero-3-phospho-1D-myo-inositol(in). Functionally, glycerophosphodiester transporter that mediates uptake of glycerophosphoinositol (GroPIns) as a source of inositol and phosphate. Does not possess detectable glycerophosphocholine (GroPCho) transport activity. Although no glycerophosphoinositol transport activity occurs in the absence of GIT1, C.albicans is still able to use glycerophosphoinositol as a phosphate source at pH 7.5, albeit slowly. Thus, a second, GIT1-independent, mechanism must exist for utilizing glycerophosphoinositol as a phosphate source at physiological pH. The expanded ability to utilize GroPIns and GroPCho results from the organism's pathogenic nature and its need to occupy a variety of environments within its host organism. This possibility is buttressed by the fact that GroPIns and GroPCho are present and abundant in human fluids. This Candida albicans (strain SC5314 / ATCC MYA-2876) (Yeast) protein is Glycerophosphoinositol permease 1.